The following is a 476-amino-acid chain: Protein transport protein Sec61 subunit alpha (476 aa).

The Cytoplasmic portion of the chain corresponds to 2–33; sequence GIKFLEVIKPFCAVLPEIQKPERKIQFREKVL. A helical membrane pass occupies residues 34-53; sequence WTAITLFIFLVCCQIPLFGI. At 54–76 the chain is on the lumenal side; that stretch reads MSSDSADPFYWMRVILASNRGTL. The chain crosses the membrane as a helical span at residues 77–96; sequence MELGISPIVTSGLIMQLLAG. Over 97 to 117 the chain is Cytoplasmic; sequence AKIIEVGDTPKDRALFNGAQK. Residues 118-138 traverse the membrane as a helical segment; sequence LFGMIITIGQAIVYVMTGMYG. Topologically, residues 139 to 144 are lumenal; it reads DPSEMG. A helical transmembrane segment spans residues 145-165; sequence AGICLVIIIQLFVAGLIVLLL. Topologically, residues 166–172 are cytoplasmic; the sequence is DELLQKG. A helical membrane pass occupies residues 173 to 193; the sequence is YGLGSGISLFIATNICETIVW. Topologically, residues 194–240 are lumenal; it reads KAFSPTTVNTGRGTEFEGAIIALFHLLATRTDKVRALREAFYRQNLP. The chain crosses the membrane as a helical span at residues 241-261; sequence NLMNLIATVFVFAVVIYFQGF. The Cytoplasmic portion of the chain corresponds to 262–288; it reads RVDLPIKSARYRGQYNTYPIKLFYTSN. Residues 289 to 309 traverse the membrane as a helical segment; that stretch reads IPIILQSALVSNLYVISQMLS. At 310-354 the chain is on the lumenal side; it reads TRFSGNFLVNLLGTWSDTSTGGPARAYPVGGLCYYFSPPESFGSV. A helical membrane pass occupies residues 355–375; it reads LDDPVHASIYIVFMLGSCAFF. At 376–420 the chain is on the cytoplasmic side; sequence SKTWIEVSGSSAKDVAKQLKEQQMVMRGHRETSMVHELNRYIPTA. Residues 421–441 form a helical membrane-spanning segment; sequence AAFGGLCIGGLSVMADFLGAI. Residues 442 to 445 lie on the Lumenal side of the membrane; it reads GSGT. A helical transmembrane segment spans residues 446-462; sequence GILLAVTIIYQYFEIFV. Topologically, residues 463-476 are cytoplasmic; it reads KEQSEMGSMGALLF.

This sequence belongs to the SecY/SEC61-alpha family. As to quaternary structure, the SEC61 channel-forming translocon complex consists of channel-forming core components SEC61A1, SEC61B and SEC61G and different auxiliary components such as SEC62 and SEC63. The SEC61 channel associates with the multi-pass translocon (MPT) complex.

It is found in the endoplasmic reticulum membrane. Functionally, component of SEC61 channel-forming translocon complex that mediates transport of signal peptide-containing precursor polypeptides across the endoplasmic reticulum (ER). Forms a ribosome receptor and a gated pore in the ER membrane, both functions required for cotranslational translocation of nascent polypeptides. May cooperate with auxiliary protein SEC62, SEC63 and HSPA5/BiP to enable post-translational transport of small presecretory proteins. The SEC61 channel is also involved in ER membrane insertion of transmembrane proteins: it mediates membrane insertion of the first few transmembrane segments of proteins, while insertion of subsequent transmembrane regions of multi-pass membrane proteins is mediated by the multi-pass translocon (MPT) complex. In Gadus ogac (Greenland cod), this protein is Protein transport protein Sec61 subunit alpha (sec61a).